A 246-amino-acid polypeptide reads, in one-letter code: Bis(5'-nucleosyl)-tetraphosphatase PrpE [asymmetrical] (246 aa).

It belongs to the PrpE family. It depends on Ni(2+) as a cofactor.

The enzyme catalyses P(1),P(4)-bis(5'-guanosyl) tetraphosphate + H2O = GMP + GTP + 2 H(+). Asymmetrically hydrolyzes Ap4p to yield AMP and ATP. In Bacillus cereus (strain 03BB102), this protein is Bis(5'-nucleosyl)-tetraphosphatase PrpE [asymmetrical].